The primary structure comprises 559 residues: Non-homologous end joining factor IFFO1 (559 aa).

Positions 21–57 (GPLGDSLGGDHFAGGGDLPPAPLSPAGPAAYSPPGPG) are disordered. Over residues 39–57 (PPAPLSPAGPAAYSPPGPG) the composition is skewed to pro residues. An LMNA binding region spans residues 65–116 (ALRNDLGSNINVLKTLNLRFRCFLAKVHELERRNRLLEKQLQQALEEGKQGR). The IF rod domain maps to 73-526 (NINVLKTLNL…RLITQSGDRK (454 aa)). Residues 85–117 (RCFLAKVHELERRNRLLEKQLQQALEEGKQGRR) are a coiled coil. The tract at residues 158-187 (SPARSPAGPLAPSAASLSSSSTSTSTTYSS) is disordered. Residues 237–301 (EIRALYNVLA…LKVEQLKAEL (65 aa)) are a coiled coil. Residues 360-394 (SMGGRKRERKAAVEEDTSLSESEGPRQPDGDEEES) are disordered. Residues 450-525 (EQEDSLEKVI…RRLITQSGDR (76 aa)) are XCCR4 binding. Required for localization to the double-strand breaks (DSBs). Positions 455–501 (LEKVIKDTESLFKTREKEYQETIDQIELELATAKNDMNRHLHEYMEM) form a coiled coil. Residues 520–559 (TQSGDRKSPAFTAVPLSDPPPPPSEAEDSDRDVSSDSSMR) are disordered. Residues 550–559 (RDVSSDSSMR) show a composition bias toward basic and acidic residues.

The protein belongs to the intermediate filament family. Forms a heterotetramer with XRCC4. The interaction with XRCC4 is direct, involves LIG4-free XRCC4 and leads to relocalization of IFFO1 at the double-strand break (DSB) sites. Interacts with LMNA; the interaction forms an interior nucleoskeleton and the recruitment to DNA double-strand breaks. As to expression, ubiquitously expressed.

Its subcellular location is the nucleus. It localises to the nucleoplasm. The protein localises to the nucleus inner membrane. The protein resides in the nucleus matrix. Its function is as follows. Nuclear matrix protein involved in the immobilization of broken DNA ends and the suppression of chromosome translocation during DNA double-strand breaks (DSBs). Interacts with the nuclear lamina component LMNA, resulting in the formation of a nucleoskeleton that relocalizes to the DSB sites in a XRCC4-dependent manner and promotes the immobilization of the broken ends, thereby preventing chromosome translocation. Acts as a scaffold that allows the DNA repair protein XRCC4 and LMNA to assemble into a complex at the DSB sites. The protein is Non-homologous end joining factor IFFO1 of Homo sapiens (Human).